A 479-amino-acid polypeptide reads, in one-letter code: 5-hydroxytryptamine receptor 2B (479 aa).

Residues Met1–Trp55 are Extracellular-facing. A helical transmembrane segment spans residues Ala56–Val78. The Cytoplasmic portion of the chain corresponds to Ser79 to Asn89. A helical membrane pass occupies residues Tyr90 to Leu112. Residues Thr113 to Pro128 are Extracellular-facing. Cysteines 127 and 206 form a disulfide. The helical transmembrane segment at Ala129–Leu150 threads the bilayer. Residues Asp134 and Thr139 each coordinate ergotamine. The DRY motif; important for ligand-induced conformation changes signature appears at Asp151–Tyr153. The Cytoplasmic segment spans residues Asp151–Thr170. Residues Ala171 to Ile191 form a helical membrane-spanning segment. Residues Lys192–Ser215 lie on the Extracellular side of the membrane. Asn203 is a glycosylation site (N-linked (GlcNAc...) asparagine). Leu208 lines the ergotamine pocket. Positions Asp211–Gly214 match the [DE]RFG motif; may stabilize a conformation that preferentially activates signaling via beta-arrestin family members motif. A helical transmembrane segment spans residues Phe216–Leu238. Residues Thr239–Lys323 are Cytoplasmic-facing. A helical transmembrane segment spans residues Val324–Val344. Topologically, residues Thr345 to Thr359 are extracellular. Cys349 and Cys352 are oxidised to a cystine. Asn353 is a glycosylation site (N-linked (GlcNAc...) asparagine). A helical membrane pass occupies residues Leu360–Leu381. Positions Asn375–Tyr379 match the NPxxY motif; important for ligand-induced conformation changes and signaling motif. At Phe382–Ile479 the chain is on the cytoplasmic side. The S-palmitoyl cysteine moiety is linked to residue Cys396. The PDZ-binding signature appears at Ser477–Ile479.

Belongs to the G-protein coupled receptor 1 family. As to quaternary structure, interacts (via C-terminus) with MPDZ. In terms of tissue distribution, stomach fundus.

Its subcellular location is the cell membrane. It is found in the synapse. It localises to the synaptosome. In terms of biological role, G-protein coupled receptor for 5-hydroxytryptamine (serotonin). Also functions as a receptor for various ergot alkaloid derivatives and psychoactive substances. Ligand binding causes a conformation change that triggers signaling via guanine nucleotide-binding proteins (G proteins) and modulates the activity of downstream effectors. HTR2B is coupled to G(q)/G(11) G alpha proteins and activates phospholipase C-beta, releasing diacylglycerol (DAG) and inositol 1,4,5-trisphosphate (IP3) second messengers that modulate the activity of phosphatidylinositol 3-kinase and promote the release of Ca(2+) ions from intracellular stores, respectively. Beta-arrestin family members inhibit signaling via G proteins and mediate activation of alternative signaling pathways. Plays a role in the regulation of dopamine and 5-hydroxytryptamine release, 5-hydroxytryptamine uptake and in the regulation of extracellular dopamine and 5-hydroxytryptamine levels, and thereby affects neural activity. May play a role in the perception of pain. Plays a role in the regulation of behavior, including impulsive behavior. Required for normal proliferation of embryonic cardiac myocytes and normal heart development. Protects cardiomyocytes against apoptosis. Plays a role in the adaptation of pulmonary arteries to chronic hypoxia. Plays a role in vasoconstriction. Required for normal osteoblast function and proliferation, and for maintaining normal bone density. Required for normal proliferation of the interstitial cells of Cajal in the intestine. The chain is 5-hydroxytryptamine receptor 2B (Htr2b) from Rattus norvegicus (Rat).